The sequence spans 142 residues: Hemoglobin subunit alpha (142 aa).

Residues 2 to 142 (VLSAADKSNV…VGTVLTSKYR (141 aa)) form the Globin domain. Position 4 is a phosphoserine (Ser4). 2 positions are modified to N6-succinyllysine: Lys8 and Lys12. Residue Lys17 is modified to N6-acetyllysine; alternate. The residue at position 17 (Lys17) is an N6-succinyllysine; alternate. Tyr25 carries the post-translational modification Phosphotyrosine. Ser36 is modified (phosphoserine). An N6-succinyllysine modification is found at Lys41. The residue at position 50 (Ser50) is a Phosphoserine. His59 provides a ligand contact to O2. His88 lines the heme b pocket. Ser103 carries the post-translational modification Phosphoserine. Thr109 is subject to Phosphothreonine. Phosphoserine occurs at positions 125 and 132. Thr135 and Thr138 each carry phosphothreonine. Ser139 carries the phosphoserine modification.

It belongs to the globin family. Heterotetramer of two alpha chains and two beta chains. Red blood cells.

Involved in oxygen transport from the lung to the various peripheral tissues. Functionally, hemopressin acts as an antagonist peptide of the cannabinoid receptor CNR1. Hemopressin-binding efficiently blocks cannabinoid receptor CNR1 and subsequent signaling. In Pantholops hodgsonii (Chiru), this protein is Hemoglobin subunit alpha (HBA).